A 222-amino-acid polypeptide reads, in one-letter code: Small ribosomal subunit protein uS7m (222 aa).

A mitochondrion-targeting transit peptide spans 1–14 (MTTKLARFAQKRWI).

The protein belongs to the universal ribosomal protein uS7 family. In terms of assembly, component of the mitochondrial ribosome small subunit (28S) which comprises a 12S rRNA and about 30 distinct proteins.

The protein localises to the mitochondrion. In Caenorhabditis elegans, this protein is Small ribosomal subunit protein uS7m (mrps-7).